A 459-amino-acid chain; its full sequence is MGSKSPEDHRQGPDGGSADTAIAIVNPPKSAAASGLLQGMLEGQDEDGDDDDDEKTGIDLKTNDGAKKKRKRNKKKSKKLSVVQQTSPPRVPLATLFDNQPYPEGQIVDYNVKDDNLQRTTAEELRHLAAVRDMDDDFLKDYRKAAEVHRQVRRYAQAIAKPGVSMTRLAEEIDDGVRALTGHEGLETGDALKAGLAFPTGLCLNHVGAHWTPNAGAKDVILKHDDVLKVDFGVHVNGRIVDSAFTVAANPVYDNLLAAVKAATNTGLEEAGIDARIDHISEAIQEVMESYEVELNGKTIPIKAVRNITGHNILRYRIHGDKQVPFVKTKTDQRMEEGDIFAIETFGSTGKAYLQDDVGVYGYGRNENMNPAVLHQSSAKSLLKTIDANFGTLVFARRQLERLPGVEKYHLGMRTLVNSGLVESYAPLVDIPGSYIAQFEHTVLLRPNCKEIISRGEDY.

A compositionally biased stretch (basic and acidic residues) spans 1 to 12 (MGSKSPEDHRQG). The segment at 1 to 87 (MGSKSPEDHR…KKLSVVQQTS (87 aa)) is disordered. Residues 43–54 (GQDEDGDDDDDE) show a composition bias toward acidic residues. The span at 55 to 66 (KTGIDLKTNDGA) shows a compositional bias: basic and acidic residues. The span at 67–79 (KKKRKRNKKKSKK) shows a compositional bias: basic residues. Histidine 210 is a substrate binding site. Residues aspartate 231, aspartate 242, and histidine 311 each contribute to the a divalent metal cation site. Histidine 319 contacts substrate. A divalent metal cation contacts are provided by glutamate 344 and glutamate 440.

Belongs to the peptidase M24A family. Methionine aminopeptidase eukaryotic type 2 subfamily. Co(2+) is required as a cofactor. It depends on Zn(2+) as a cofactor. The cofactor is Mn(2+). Fe(2+) serves as cofactor.

It is found in the cytoplasm. It carries out the reaction Release of N-terminal amino acids, preferentially methionine, from peptides and arylamides.. Functionally, cotranslationally removes the N-terminal methionine from nascent proteins. The N-terminal methionine is often cleaved when the second residue in the primary sequence is small and uncharged (Met-Ala-, Cys, Gly, Pro, Ser, Thr, or Val). The polypeptide is Methionine aminopeptidase 2-2 (Pyrenophora teres f. teres (strain 0-1) (Barley net blotch fungus)).